The following is a 391-amino-acid chain: Alanine racemase (391 aa).

The Proton acceptor; specific for D-alanine role is filled by Lys-38. The residue at position 38 (Lys-38) is an N6-(pyridoxal phosphate)lysine. Arg-136 is a binding site for substrate. The Proton acceptor; specific for L-alanine role is filled by Tyr-267. Met-315 contributes to the substrate binding site.

This sequence belongs to the alanine racemase family. Pyridoxal 5'-phosphate is required as a cofactor.

It carries out the reaction L-alanine = D-alanine. The protein operates within amino-acid biosynthesis; D-alanine biosynthesis; D-alanine from L-alanine: step 1/1. Its function is as follows. Catalyzes the interconversion of L-alanine and D-alanine. May also act on other amino acids. The sequence is that of Alanine racemase (alr) from Clostridium kluyveri (strain ATCC 8527 / DSM 555 / NBRC 12016 / NCIMB 10680 / K1).